The following is a 304-amino-acid chain: Non-specific ribonucleoside hydrolase RihC (304 aa).

The active site involves His233.

This sequence belongs to the IUNH family. RihC subfamily.

Its function is as follows. Hydrolyzes both purine and pyrimidine ribonucleosides with a broad-substrate specificity. The polypeptide is Non-specific ribonucleoside hydrolase RihC (Escherichia coli (strain 55989 / EAEC)).